Reading from the N-terminus, the 113-residue chain is Iron-sulfur cluster insertion protein ErpA (113 aa).

3 residues coordinate iron-sulfur cluster: cysteine 41, cysteine 105, and cysteine 107.

This sequence belongs to the HesB/IscA family. Homodimer. The cofactor is iron-sulfur cluster.

In terms of biological role, required for insertion of 4Fe-4S clusters for at least IspG. This chain is Iron-sulfur cluster insertion protein ErpA, found in Histophilus somni (strain 129Pt) (Haemophilus somnus).